The primary structure comprises 209 residues: PRA1 family protein A2 (209 aa).

The next 4 helical transmembrane spans lie at 51–72 (LYYY…ALVT), 76–98 (ALVG…AASF), 142–162 (RWVF…SSCG), and 163–183 (LLWV…HASI).

The protein belongs to the PRA1 family.

It is found in the endosome membrane. In terms of biological role, may be involved in both secretory and endocytic intracellular trafficking in the endosomal/prevacuolar compartments. This Arabidopsis thaliana (Mouse-ear cress) protein is PRA1 family protein A2 (PRA1A2).